The following is a 1902-amino-acid chain: PII-type proteinase (1902 aa).

An N-terminal signal peptide occupies residues 1-33 (MQRKKKGLSILLAGTVALGALAVLPVGEIQAKA). The propeptide occupies 34-187 (AISQQTKVSS…VTLAKVYYPT (154 aa)). In terms of domain architecture, Peptidase S8 spans 191–697 (ANSMANVQAV…AGLVDVKAAI (507 aa)). Catalysis depends on charge relay system residues Asp217, His281, and Ser620. Over residues 1793–1805 (KTAGKGDDTTGTS) the composition is skewed to low complexity. A disordered region spans residues 1793-1872 (KTAGKGDDTT…GKGALPKTAE (80 aa)). An LPXTG sorting signal motif is present at residues 1867–1871 (LPKTA). Thr1870 bears the Pentaglycyl murein peptidoglycan amidated threonine mark. The propeptide at 1871–1902 (AETTERPAFGFLGVIVVSLMGVLGLKRKQREE) is removed by sortase.

The protein belongs to the peptidase S8 family.

It localises to the secreted. The protein localises to the cell wall. It carries out the reaction Endopeptidase activity with very broad specificity, although some subsite preference have been noted, e.g. large hydrophobic residues in the P1 and P4 positions, and Pro in the P2 position. Best known for its action on caseins, although it has been shown to hydrolyze hemoglobin and oxidized insulin B-chain.. Its function is as follows. Protease which breaks down milk proteins during the growth of the bacteria on milk. The polypeptide is PII-type proteinase (prtP) (Lacticaseibacillus paracasei (Lactobacillus paracasei)).